The following is a 216-amino-acid chain: Nucleoside triphosphate pyrophosphatase (216 aa).

Asp-82 serves as the catalytic Proton acceptor.

It belongs to the Maf family. A divalent metal cation serves as cofactor.

Its subcellular location is the cytoplasm. It carries out the reaction a ribonucleoside 5'-triphosphate + H2O = a ribonucleoside 5'-phosphate + diphosphate + H(+). It catalyses the reaction a 2'-deoxyribonucleoside 5'-triphosphate + H2O = a 2'-deoxyribonucleoside 5'-phosphate + diphosphate + H(+). Functionally, nucleoside triphosphate pyrophosphatase. May have a dual role in cell division arrest and in preventing the incorporation of modified nucleotides into cellular nucleic acids. The protein is Nucleoside triphosphate pyrophosphatase of Mycobacterium marinum (strain ATCC BAA-535 / M).